We begin with the raw amino-acid sequence, 416 residues long: Major facilitator superfamily domain-containing protein 3 (416 aa).

12 consecutive transmembrane segments (helical) span residues 10–30 (GLYL…PILL), 40–60 (VGLT…APLV), 68–88 (VWLT…AVLP), 99–119 (TTVM…DVAL), 139–158 (QVVA…LVFF), 170–190 (LTAT…LGRL), 204–224 (YLLQ…FVLT), 252–272 (LWSG…GGAL), 295–315 (LGGL…GASL), 324–344 (AALL…TATF), 365–385 (FLAT…GVLA), and 392–412 (LCFA…RLAP).

Belongs to the major facilitator superfamily.

It is found in the membrane. The polypeptide is Major facilitator superfamily domain-containing protein 3 (Mfsd3) (Rattus norvegicus (Rat)).